Here is a 134-residue protein sequence, read N- to C-terminus: U-scoloptoxin(05)-Er2a (134 aa).

The N-terminal stretch at 1-19 (MTFVVAAVVLLTVVPLATP) is a signal peptide.

It belongs to the scoloptoxin-05 family. In terms of processing, contains 5 disulfide bonds. Expressed by the venom gland.

It localises to the secreted. The chain is U-scoloptoxin(05)-Er2a from Ethmostigmus rubripes (Giant centipede).